The sequence spans 571 residues: Proline-rich protein 35 (571 aa).

Disordered stretches follow at residues 1-27 (MSREAGSCRVGTGARARSRKPKKPHYI), 79-187 (GSTT…EGSV), 286-402 (APVS…GSPE), and 476-571 (GPQA…GAEV). Residues 16-26 (ARSRKPKKPHY) are compositionally biased toward basic residues. The segment covering 165-175 (GMGGDPRGVGA) has biased composition (gly residues). A compositionally biased stretch (basic and acidic residues) spans 316–336 (TPRDPGQEGELERAAQSDPRR). A compositionally biased stretch (polar residues) spans 351 to 367 (PSLTRFCSRSSLPTGSS). A compositionally biased stretch (pro residues) spans 380–399 (PETPGPEGPLPLQPRGPVPG).

The sequence is that of Proline-rich protein 35 (PRR35) from Homo sapiens (Human).